We begin with the raw amino-acid sequence, 207 residues long: Fibronectin type III domain-containing protein 5b (207 aa).

A signal peptide spans 1 to 26 (MWGIKGSFAVLLLLFLAYIFASSVNA). The Extracellular segment spans residues 27 to 146 (DSLSAPLNVT…EEVGQAAQLR (120 aa)). Residues 31 to 122 (APLNVTIKAL…EPVLFRTPKE (92 aa)) form the Fibronectin type-III domain. N-linked (GlcNAc...) asparagine glycans are attached at residues Asn-34 and Asn-79. A helical membrane pass occupies residues 147–167 (AGELIIIVVVLVMWAGVIALF). Topologically, residues 168 to 207 (CRQYDIIKDNEPNNNKDKAKNSSECSTPEHPTGGLLRSKV) are cytoplasmic. A compositionally biased stretch (basic and acidic residues) spans 178 to 188 (EPNNNKDKAKN). Residues 178–207 (EPNNNKDKAKNSSECSTPEHPTGGLLRSKV) are disordered. The short motif at 205–207 (SKV) is the Microbody targeting signal element.

In terms of assembly, dimer; may exist in other oligomeric forms. Post-translationally, the extracellular domain is cleaved and released from the cell membrane.

It localises to the cell membrane. The protein resides in the peroxisome membrane. The protein localises to the secreted. Its function is as follows. May mediate beneficial effects of muscular exercise. In Danio rerio (Zebrafish), this protein is Fibronectin type III domain-containing protein 5b (fndc5b).